Reading from the N-terminus, the 828-residue chain is Molybdenum cofactor sulfurase (828 aa).

At Lys-239 the chain carries N6-(pyridoxal phosphate)lysine. Cys-402 is an active-site residue. Positions 638–682 are disordered; it reads TRYTRRSLHSRSSTAALRRQRPVEESSMPGSFPSDTPLSRTPEPP. In terms of domain architecture, MOSC spans 652–825; the sequence is AALRRQRPVE…VMVGDVVRPW (174 aa).

The protein belongs to the class-V pyridoxal-phosphate-dependent aminotransferase family. MOCOS subfamily. Pyridoxal 5'-phosphate is required as a cofactor.

The catalysed reaction is Mo-molybdopterin + L-cysteine + AH2 = thio-Mo-molybdopterin + L-alanine + A + H2O. In terms of biological role, sulfurates the molybdenum cofactor. Sulfation of molybdenum is essential for xanthine dehydrogenase (XDH) and aldehyde oxidase (ADO) enzymes in which molybdenum cofactor is liganded by 1 oxygen and 1 sulfur atom in active form. The chain is Molybdenum cofactor sulfurase from Aspergillus terreus (strain NIH 2624 / FGSC A1156).